An 831-amino-acid polypeptide reads, in one-letter code: DNA ligase (831 aa).

Residues 34–38 (DADYD), 83–84 (SL), and Glu-114 each bind NAD(+). The N6-AMP-lysine intermediate role is filled by Lys-116. 4 residues coordinate NAD(+): Arg-137, Glu-174, Lys-291, and Lys-315. Zn(2+) is bound by residues Cys-409, Cys-412, Cys-427, and Cys-433. One can recognise a BRCT domain in the interval 749–831 (AHTAPLNGQS…LAFLEQYSAQ (83 aa)).

It belongs to the NAD-dependent DNA ligase family. LigA subfamily. Mg(2+) serves as cofactor. Requires Mn(2+) as cofactor.

The enzyme catalyses NAD(+) + (deoxyribonucleotide)n-3'-hydroxyl + 5'-phospho-(deoxyribonucleotide)m = (deoxyribonucleotide)n+m + AMP + beta-nicotinamide D-nucleotide.. In terms of biological role, DNA ligase that catalyzes the formation of phosphodiester linkages between 5'-phosphoryl and 3'-hydroxyl groups in double-stranded DNA using NAD as a coenzyme and as the energy source for the reaction. It is essential for DNA replication and repair of damaged DNA. The chain is DNA ligase from Xylella fastidiosa (strain M23).